The chain runs to 186 residues: Peptidyl-tRNA hydrolase (186 aa).

A tRNA-binding site is contributed by Y14. H19 acts as the Proton acceptor in catalysis. Positions 61, 63, and 107 each coordinate tRNA.

This sequence belongs to the PTH family. As to quaternary structure, monomer.

It is found in the cytoplasm. It carries out the reaction an N-acyl-L-alpha-aminoacyl-tRNA + H2O = an N-acyl-L-amino acid + a tRNA + H(+). Hydrolyzes ribosome-free peptidyl-tRNAs (with 1 or more amino acids incorporated), which drop off the ribosome during protein synthesis, or as a result of ribosome stalling. In terms of biological role, catalyzes the release of premature peptidyl moieties from peptidyl-tRNA molecules trapped in stalled 50S ribosomal subunits, and thus maintains levels of free tRNAs and 50S ribosomes. The sequence is that of Peptidyl-tRNA hydrolase from Helicobacter acinonychis (strain Sheeba).